A 202-amino-acid polypeptide reads, in one-letter code: ATP-dependent Clp protease proteolytic subunit (202 aa).

Catalysis depends on serine 107, which acts as the Nucleophile. Residue histidine 132 is part of the active site.

The protein belongs to the peptidase S14 family. In terms of assembly, fourteen ClpP subunits assemble into 2 heptameric rings which stack back to back to give a disk-like structure with a central cavity, resembling the structure of eukaryotic proteasomes.

The protein resides in the cytoplasm. It carries out the reaction Hydrolysis of proteins to small peptides in the presence of ATP and magnesium. alpha-casein is the usual test substrate. In the absence of ATP, only oligopeptides shorter than five residues are hydrolyzed (such as succinyl-Leu-Tyr-|-NHMec, and Leu-Tyr-Leu-|-Tyr-Trp, in which cleavage of the -Tyr-|-Leu- and -Tyr-|-Trp bonds also occurs).. Its function is as follows. Cleaves peptides in various proteins in a process that requires ATP hydrolysis. Has a chymotrypsin-like activity. Plays a major role in the degradation of misfolded proteins. The sequence is that of ATP-dependent Clp protease proteolytic subunit from Shewanella amazonensis (strain ATCC BAA-1098 / SB2B).